The sequence spans 279 residues: uncharacterized protein (279 aa).

The GIY-YIG domain occupies 2 to 90; it reads KIGYIYAIEN…IRDYGSLNTI (89 aa).

The protein belongs to the IIV-6 019R family.

This is an uncharacterized protein from Acheta domesticus (House cricket).